A 606-amino-acid chain; its full sequence is Gamma-aminobutyric acid receptor subunit beta (606 aa).

The signal sequence occupies residues 1 to 44 (MSDSKMDKLARMAPLPRTPLLTIWLAINMALIAQETGHKRIHTV). Topologically, residues 45-268 (QAATGGGSML…CEIQFVRSMG (224 aa)) are extracellular. N-linked (GlcNAc...) asparagine glycosylation is present at asparagine 58. Cysteines 185 and 199 form a disulfide. Residue asparagine 253 is glycosylated (N-linked (GlcNAc...) asparagine). Helical transmembrane passes span 269 to 291 (YYLI…SFWL), 297 to 316 (PARV…LMSS), and 333 to 356 (YLGT…YMAK). Topologically, residues 357 to 568 (RIQMRKQRFM…LGITPSDIDK (212 aa)) are cytoplasmic. Disordered regions lie at residues 376 to 451 (KQQL…VSNR) and 482 to 542 (HDPK…AAVP). A compositionally biased stretch (low complexity) spans 381 to 395 (GANQQQANPNPNANV). Over residues 396–425 (GGPGGVGVGPGGPGGPGGGVNVGVGMGMGP) the composition is skewed to gly residues. Over residues 430–443 (GHGHHAHSHGHPHA) the composition is skewed to basic residues. Residues 499–536 (GGRGGPQSHGPGPGQGGGPPGGGGGGGGGGGPPEGGGD) are compositionally biased toward gly residues. A helical membrane pass occupies residues 569-590 (YSRIVFPVCFVCFNLMYWIIYL).

The protein belongs to the ligand-gated ion channel (TC 1.A.9) family. Gamma-aminobutyric acid receptor (TC 1.A.9.5) subfamily. Forms oligomers. Interacts with Nlg4; the interaction mediates Rdl clustering. Interacts with Fbxl4; the interaction mediates Rdl degradation. Expressed in different parts of the brain: the mushroom bodies (alpha, alpha', beta, beta', gamma lobes and peduncles), the neurons projecting to the columnar-type neuron LC9 optic glomerulus, in interneurons connecting the paired olfactory lobes, antennal lobes, PDF-expressing small and large ventral lateral neurons (LNvs) of the circadian clock and lobula columnar neuron 11 (LC11) (at protein level). Expressed in all major ON pathway medulla neurons (Mi1, Tm3, Mi4, and Mi9) and in OFF pathway neurons (Tm1, Tm2, Tm4, and Tm9).

It is found in the cell membrane. Its subcellular location is the postsynaptic cell membrane. It localises to the cell projection. The protein resides in the dendrite. The protein localises to the axon. With respect to regulation, activated by agonist muscimol. Insensitive to zinc, glycine, glutamate, and baclofen, loreclezole, to antagonist bicuculline, glycine-receptor antagonist strychnine, and nonselective GABA and glycine antagonist RU 5135. Insensitive to flunitrazepam, pentobarbitone or pregnane steroids such as 5alpha-pregnan-3alpha-ol-20-one. Inhibited by insecticides picrotoxin (PTX), cyclodiene dieldrin, TBPS and lindane. Inhibited by ivermectin, fipronil and pyrafluprole. Its activity is regulated as follows. Inhibited by insecticides picrotoxin (PTX). Gamma-aminobutyric acid (GABA) receptor voltage channel subunit. GABA, an inhibitory neurotransmitter, mediates neuronal inhibition by binding to the GABA receptor and opening an integral chloride channel. Together with glutamate receptor GluClalpha, plays an important role in the visual response by regulating the activity of ON/OFF-selective neurons. Plays a role in promoting sleep and sleep latency by regulating the activity of peptidergic PDF neurons. In large ventral lateral clock neurons, clustering is mediated by Nlg4 and protein levels undergo daily degradation in response to the circadian clock. In neurons in the mushroom bodies, has a role in odor memory acquisition where it inhibits appetitive and aversive olfactory learning, probably upstream of Adcy1/adenylate cyclase 1 and GTPase activating protein Nf1. In male-specific GABAergic neurons, plays a role in inhibiting male aggressive behavior during courtship. Functionally, gamma-aminobutyric acid (GABA) receptor voltage channel subunit. The polypeptide is Gamma-aminobutyric acid receptor subunit beta (Rdl) (Drosophila melanogaster (Fruit fly)).